A 415-amino-acid polypeptide reads, in one-letter code: Tyrosine--tRNA ligase (415 aa).

Position 34 (Tyr-34) interacts with L-tyrosine. The 'HIGH' region motif lies at 39-48 (PTADSLHLGH). Residues Tyr-164 and Gln-168 each coordinate L-tyrosine. The 'KMSKS' region motif lies at 226–230 (KFGKS). Lys-229 is an ATP binding site. One can recognise an S4 RNA-binding domain in the interval 348 to 415 (KNIVDFLVDG…KKKYFLGKIK (68 aa)).

This sequence belongs to the class-I aminoacyl-tRNA synthetase family. TyrS type 1 subfamily. In terms of assembly, homodimer.

The protein resides in the cytoplasm. It carries out the reaction tRNA(Tyr) + L-tyrosine + ATP = L-tyrosyl-tRNA(Tyr) + AMP + diphosphate + H(+). Functionally, catalyzes the attachment of tyrosine to tRNA(Tyr) in a two-step reaction: tyrosine is first activated by ATP to form Tyr-AMP and then transferred to the acceptor end of tRNA(Tyr). The protein is Tyrosine--tRNA ligase of Leuconostoc citreum (strain KM20).